A 162-amino-acid chain; its full sequence is L-amino acid N-acetyltransferase AaaT (162 aa).

Residues 4-162 form the N-acetyltransferase domain; sequence IVIRHAETRD…VDAYYMARVK (159 aa).

The protein belongs to the acetyltransferase family.

It carries out the reaction L-phenylalanine + acetyl-CoA = N-acetyl-L-phenylalanine + CoA + H(+). The enzyme catalyses L-methionine + acetyl-CoA = N-acetyl-L-methionine + CoA + H(+). Catalyzes the N-acetylation of L-phenylalanine and L-methionine using acetyl-CoA as acetyl donor in vitro. Cannot accept L-tyrosine as substrate and propionyl-CoA, succinyl-CoA or (S)-methylmalonyl-CoA as acyl donors. Is also able to acetylate and thus detoxify several nonhydrolyzable aminoacyl adenylates, but not the processed form of the peptide-nucleotide antibiotic microcin C (McC). When overproduced, provides complete resistance to leucyl sulfamoyl adenylate (LSA) and partial resistance to alanyl sulfamoyl adenylate (ASA) and phenylalanyl sulfamoyl adenylate (FSA). Therefore, may protect bacteria from various toxic aminoacyl nucleotides, either exogenous or those generated inside the cell during normal metabolism. The polypeptide is L-amino acid N-acetyltransferase AaaT (Escherichia coli (strain K12)).